The sequence spans 86 residues: Putative membrane protein insertion efficiency factor (86 aa).

Residues 66 to 86 (FSKGGFDPVPPHDGVPGKKED) form a disordered region.

The protein belongs to the UPF0161 family.

The protein localises to the cell inner membrane. Its function is as follows. Could be involved in insertion of integral membrane proteins into the membrane. In Chlorobium luteolum (strain DSM 273 / BCRC 81028 / 2530) (Pelodictyon luteolum), this protein is Putative membrane protein insertion efficiency factor.